Here is a 262-residue protein sequence, read N- to C-terminus: 3-methyl-2-oxobutanoate hydroxymethyltransferase (262 aa).

Mg(2+) contacts are provided by Asp42 and Asp81. Residues 42-43 (DS), Asp81, and Lys110 each bind 3-methyl-2-oxobutanoate. A Mg(2+)-binding site is contributed by Glu112. Glu179 serves as the catalytic Proton acceptor.

Belongs to the PanB family. Homodecamer; pentamer of dimers. The cofactor is Mg(2+).

It is found in the cytoplasm. It carries out the reaction 3-methyl-2-oxobutanoate + (6R)-5,10-methylene-5,6,7,8-tetrahydrofolate + H2O = 2-dehydropantoate + (6S)-5,6,7,8-tetrahydrofolate. It participates in cofactor biosynthesis; (R)-pantothenate biosynthesis; (R)-pantoate from 3-methyl-2-oxobutanoate: step 1/2. Catalyzes the reversible reaction in which hydroxymethyl group from 5,10-methylenetetrahydrofolate is transferred onto alpha-ketoisovalerate to form ketopantoate. This chain is 3-methyl-2-oxobutanoate hydroxymethyltransferase, found in Methylobacillus flagellatus (strain ATCC 51484 / DSM 6875 / VKM B-1610 / KT).